Consider the following 658-residue polypeptide: Carnitine O-palmitoyltransferase 2, mitochondrial (658 aa).

A mitochondrion-targeting transit peptide spans Met1–Leu25. Residues Ser26–Leu178 lie on the Mitochondrial matrix side of the membrane. Position 69 is an N6-succinyllysine (Lys69). Lys79 bears the N6-acetyllysine mark. The residue at position 85 (Lys85) is an N6-succinyllysine. The segment at residues Asn179–Asn208 is an intramembrane region (note=Mitochondrial inner membrane). Residues Ala209–Ser658 lie on the Mitochondrial matrix side of the membrane. Position 239 is an N6-acetyllysine; alternate (Lys239). Lys239 is subject to N6-succinyllysine; alternate. An N6-acetyllysine modification is found at Lys305. His372 functions as the Proton acceptor in the catalytic mechanism. Residue Lys418 is modified to N6-acetyllysine; alternate. N6-succinyllysine; alternate is present on Lys418. 2 positions are modified to N6-succinyllysine: Lys424 and Lys439. CoA is bound at residue Gly452 to Asp464. The (R)-carnitine site is built by Tyr486, Ser488, and Thr499. An N6-acetyllysine; alternate mark is found at Lys510 and Lys544. 2 positions are modified to N6-succinyllysine; alternate: Lys510 and Lys544.

The protein belongs to the carnitine/choline acetyltransferase family.

It localises to the mitochondrion inner membrane. The enzyme catalyses (R)-carnitine + hexadecanoyl-CoA = O-hexadecanoyl-(R)-carnitine + CoA. It catalyses the reaction octanoyl-CoA + (R)-carnitine = O-octanoyl-(R)-carnitine + CoA. It carries out the reaction decanoyl-CoA + (R)-carnitine = O-decanoyl-(R)-carnitine + CoA. The catalysed reaction is dodecanoyl-CoA + (R)-carnitine = O-dodecanoyl-R-carnitine + CoA. The enzyme catalyses tetradecanoyl-CoA + (R)-carnitine = O-tetradecanoyl-(R)-carnitine + CoA. It catalyses the reaction (R)-carnitine + octadecanoyl-CoA = O-octadecanoyl-(R)-carnitine + CoA. It carries out the reaction eicosanoyl-CoA + (R)-carnitine = O-eicosanoyl-(R)-carnitine + CoA. The catalysed reaction is (9Z)-tetradecenoyl-CoA + (R)-carnitine = O-(9Z)-tetradecenoyl-(R)-carnitine + CoA. The enzyme catalyses (5Z)-tetradecenoyl-CoA + (R)-carnitine = O-(5Z)-tetradecenoyl-(R)-carnitine + CoA. It catalyses the reaction (R)-carnitine + (9Z)-octadecenoyl-CoA = O-(9Z)-octadecenoyl-(R)-carnitine + CoA. It carries out the reaction 4,8-dimethylnonanoyl-CoA + (R)-carnitine = O-4,8-dimethylnonanoyl-(R)-carnitine + CoA. It participates in lipid metabolism; fatty acid beta-oxidation. In terms of biological role, involved in the intramitochondrial synthesis of acylcarnitines from accumulated acyl-CoA metabolites. Reconverts acylcarnitines back into the respective acyl-CoA esters that can then undergo beta-oxidation, an essential step for the mitochondrial uptake of long-chain fatty acids and their subsequent beta-oxidation in the mitochondrion. Active with medium (C8-C12) and long-chain (C14-C18) acyl-CoA esters. The polypeptide is Carnitine O-palmitoyltransferase 2, mitochondrial (CPT2) (Macaca fascicularis (Crab-eating macaque)).